The chain runs to 162 residues: Cyclic pyranopterin monophosphate synthase (162 aa).

Substrate-binding positions include 75–77 and 115–116; these read MCH and ME. Asp-130 is a catalytic residue.

Belongs to the MoaC family. Homohexamer; trimer of dimers.

The catalysed reaction is (8S)-3',8-cyclo-7,8-dihydroguanosine 5'-triphosphate = cyclic pyranopterin phosphate + diphosphate. It participates in cofactor biosynthesis; molybdopterin biosynthesis. Catalyzes the conversion of (8S)-3',8-cyclo-7,8-dihydroguanosine 5'-triphosphate to cyclic pyranopterin monophosphate (cPMP). In Geobacillus thermodenitrificans (strain NG80-2), this protein is Cyclic pyranopterin monophosphate synthase.